Consider the following 323-residue polypeptide: tRNA-modifying protein YgfZ (323 aa).

W29 and W182 together coordinate folate.

Belongs to the tRNA-modifying YgfZ family.

Its subcellular location is the cytoplasm. Functionally, folate-binding protein involved in regulating the level of ATP-DnaA and in the modification of some tRNAs. It is probably a key factor in regulatory networks that act via tRNA modification, such as initiation of chromosomal replication. This is tRNA-modifying protein YgfZ from Vibrio atlanticus (strain LGP32) (Vibrio splendidus (strain Mel32)).